The sequence spans 75 residues: uncharacterized protein (75 aa).

This is an uncharacterized protein from Dryophytes versicolor (chameleon treefrog).